The sequence spans 499 residues: MTTKKLYFLSISIIILVAISIAIYITLNSNTKTRLTNDSQQQIDTIIEHDLQKGHIPGASILIVKNGKVFLNKGYGYQDVDKKVKASPTTKYEIASNTKAFTGLAILKLAQEGRLNLNDDVSKHVPHFKMNYNGQNETITIKQLLAQTSGIPSDITSEDSVTNKNNRLNDVTRAIMGDELHHKPGEEFEYSNMNYDLLGLIIQNVTKQSYTKYITNSWLKPLHMTHTSFKQNNNKSKHDAIGYELQGSTPVVSKPEFNLWDTPSAYMMTSTEDLEHWIKFQLNPPDKYKSLVQQSHKNLSSTIGEPNANAYASGWFTNNDEHLVFHSGTLDNFSSFILLNPKQNYGIVVLANLNSEYVPKLVEHLNTQIVNHKRYSTVASMLNQYKDQFNIVTVLMTTLILLAFIFSAYRAWQMRHGKIILRKSKLTTFLSWLTLCLCIAIALILYALPYLILGSNNWSFVLTWLPIEIKLTLTTAFIALFSMLITLLLILHTTTIKKP.

The next 4 helical transmembrane spans lie at 6–26 (LYFL…IYIT), 389–409 (FNIV…FSAY), 433–453 (LTLC…YLIL), and 471–491 (LTLT…LLIL).

It localises to the cell membrane. In terms of biological role, its precise function is unknown. Has no penicillin-binding activity and is not involved in methicillin resistance. The protein is Protein flp (flp) of Staphylococcus aureus (strain MRSA252).